Reading from the N-terminus, the 501-residue chain is Glutamate--tRNA ligase (501 aa).

Residues 11–21 carry the 'HIGH' region motif; the sequence is PSPTGFLHIGN. The short motif at 257-261 is the 'KMSKS' region element; the sequence is KLSKR. Residue K260 participates in ATP binding.

This sequence belongs to the class-I aminoacyl-tRNA synthetase family. Glutamate--tRNA ligase type 1 subfamily. In terms of assembly, monomer.

The protein localises to the cytoplasm. It catalyses the reaction tRNA(Glu) + L-glutamate + ATP = L-glutamyl-tRNA(Glu) + AMP + diphosphate. Its function is as follows. Catalyzes the attachment of glutamate to tRNA(Glu) in a two-step reaction: glutamate is first activated by ATP to form Glu-AMP and then transferred to the acceptor end of tRNA(Glu). In Limosilactobacillus reuteri subsp. reuteri (strain JCM 1112) (Lactobacillus reuteri), this protein is Glutamate--tRNA ligase.